The chain runs to 463 residues: Asparagine--tRNA ligase (463 aa).

It belongs to the class-II aminoacyl-tRNA synthetase family. As to quaternary structure, homodimer.

The protein localises to the cytoplasm. The enzyme catalyses tRNA(Asn) + L-asparagine + ATP = L-asparaginyl-tRNA(Asn) + AMP + diphosphate + H(+). The sequence is that of Asparagine--tRNA ligase from Bacillus thuringiensis subsp. konkukian (strain 97-27).